Consider the following 561-residue polypeptide: MACPF domain-containing protein CAD1 (561 aa).

The MACPF domain occupies 11–314 (VPSSEALTTT…PPIEDLQYFL (304 aa)). Positions 489–514 (VASSGRLEPGGPSTSSSTEEVSGQSG) are disordered. Residues 500–513 (PSTSSSTEEVSGQS) are compositionally biased toward polar residues.

The protein belongs to the complement C6/C7/C8/C9 (TC 1.C.39) family. As to expression, mainly expressed in the vascular system.

Its function is as follows. Negatively controls the salicylic acid (SA)-mediated pathway of programmed cell death in plant immunity. In Arabidopsis thaliana (Mouse-ear cress), this protein is MACPF domain-containing protein CAD1 (CAD1).